Reading from the N-terminus, the 199-residue chain is Alpha-D-glucose 1-phosphate phosphatase YihX (199 aa).

The Nucleophile role is filled by Asp-6. Asp-6 lines the Mg(2+) pocket. Substrate contacts are provided by residues 6 to 8 (DLG), 107 to 108 (SN), Lys-141, and Asp-166. Residue Asp-166 participates in Mg(2+) binding.

The protein belongs to the HAD-like hydrolase superfamily. YihX family. Requires Mg(2+) as cofactor. Mn(2+) serves as cofactor. The cofactor is Co(2+). Zn(2+) is required as a cofactor.

It carries out the reaction alpha-D-glucose 1-phosphate + H2O = D-glucose + phosphate. Its function is as follows. Catalyzes the dephosphorylation of alpha-D-glucose 1-phosphate (Glc1P) and, to a lesser extent, of other sugar phosphates. Has no activity with the beta form of Glc1P. In addition, YihX has significant phosphatase activity against pyridoxal phosphate (PLP) and low beta-phosphoglucomutase activity. The sequence is that of Alpha-D-glucose 1-phosphate phosphatase YihX (yihX) from Escherichia coli (strain K12).